A 62-amino-acid polypeptide reads, in one-letter code: Alkaline proteinase (62 aa).

The Peptidase S8 domain maps to 1-62; sequence GSTSYIYDTS…FAPGTSVLSS (62 aa). Residue Asp21 is the Charge relay system of the active site.

The protein resides in the secreted. Its activity is regulated as follows. Inhibited by phenylmethanesulfonyl fluoride (PMSF) and chymostatin (CST), but not by Bowman-Birk type trypsin-chymotrypsin inhibitor (BBI). In terms of biological role, serine protease. May be involved in the invasion of grains and hydrolysis of grain proteins. This Fusarium culmorum protein is Alkaline proteinase.